The primary structure comprises 124 residues: V-type proton ATPase subunit F (124 aa).

This sequence belongs to the V-ATPase F subunit family. V-ATPase is a heteromultimeric enzyme composed of a peripheral catalytic V1 complex (components A to H) attached to an integral membrane V0 proton pore complex (components: a, c, c', c'', d, e, f and VOA1).

Its subcellular location is the vacuole membrane. Subunit of the V1 complex of vacuolar(H+)-ATPase (V-ATPase), a multisubunit enzyme composed of a peripheral complex (V1) that hydrolyzes ATP and a membrane integral complex (V0) that translocates protons. V-ATPase is responsible for acidifying and maintaining the pH of intracellular compartments. The polypeptide is V-type proton ATPase subunit F (vma7) (Neosartorya fischeri (strain ATCC 1020 / DSM 3700 / CBS 544.65 / FGSC A1164 / JCM 1740 / NRRL 181 / WB 181) (Aspergillus fischerianus)).